Consider the following 233-residue polypeptide: Protein DOUBLE-STRAND BREAK FORMATION (233 aa).

In terms of assembly, interacts with PRD1; this interaction facilitates a binding to PRD3. In terms of tissue distribution, specifically expressed in buds.

Its function is as follows. Required for meiotic double-strand break (DSB) formation, the initial event for meiotic recombination. This is Protein DOUBLE-STRAND BREAK FORMATION from Arabidopsis thaliana (Mouse-ear cress).